A 402-amino-acid polypeptide reads, in one-letter code: Phosphoglycerate kinase (402 aa).

Substrate contacts are provided by residues 24-26 (DFN), R40, 63-66 (HFGR), R122, and R155. Residues K206, G297, E328, and 357–360 (GGDS) contribute to the ATP site.

This sequence belongs to the phosphoglycerate kinase family. As to quaternary structure, monomer.

The protein localises to the cytoplasm. The enzyme catalyses (2R)-3-phosphoglycerate + ATP = (2R)-3-phospho-glyceroyl phosphate + ADP. Its pathway is carbohydrate degradation; glycolysis; pyruvate from D-glyceraldehyde 3-phosphate: step 2/5. This is Phosphoglycerate kinase from Parasynechococcus marenigrum (strain WH8102).